We begin with the raw amino-acid sequence, 1288 residues long: 5-oxoprolinase (1288 aa).

A Phosphothreonine modification is found at T151. The disordered stretch occupies residues 1248–1272; the sequence is PGGGGYGDPEDPAPPPGSPPQALAF. Position 1265 is a phosphoserine (S1265).

It belongs to the oxoprolinase family. Homodimer.

It is found in the cytoplasm. The protein resides in the cytosol. It carries out the reaction 5-oxo-L-proline + ATP + 2 H2O = L-glutamate + ADP + phosphate + H(+). Catalyzes the cleavage of 5-oxo-L-proline to form L-glutamate coupled to the hydrolysis of ATP to ADP and inorganic phosphate. In Homo sapiens (Human), this protein is 5-oxoprolinase.